Here is a 437-residue protein sequence, read N- to C-terminus: Branched-chain amino acid transport system 3 carrier protein (437 aa).

12 helical membrane-spanning segments follow: residues 9–29 (ILALGFMTFALFVGAGNIIFP), 40–60 (VWLAALGFLITAVGLPVITVI), 79–99 (YAGGLLAAVCYLAVGPLFAIP), 120–140 (ALFVYSLAYFLLALAISLYPG), 155–175 (ILALAILGVAAFLWPAGPIGT), 189–209 (FVNGYLTMDTLAALVFGIVIV), 226–246 (YAIVAGLIAGVGLVLVYVSLF), 277–297 (LGSSFLAGLIALACLVTAVGL), 316–336 (LVIILAGFSFIVSNLGLTKLI), 342–362 (VLTAIYPPCIVLVALSFCIGL), 369–389 (ILAPVMLVSLAFGVLDALKAA), and 399–419 (LLHLPLAEQGLAWLIPSVATL).

Belongs to the branched chain amino acid transporter family.

The protein localises to the cell inner membrane. In terms of biological role, component of the LIV-III transport system for branched-chain amino acids. BraZ is specific for isoleucine and valine. The LIV-III transport system may be H(+)-coupled. The sequence is that of Branched-chain amino acid transport system 3 carrier protein (braZ) from Pseudomonas aeruginosa (strain ATCC 15692 / DSM 22644 / CIP 104116 / JCM 14847 / LMG 12228 / 1C / PRS 101 / PAO1).